Consider the following 328-residue polypeptide: tRNA dimethylallyltransferase (328 aa).

10–17 (GPTASGKT) lines the ATP pocket. 12–17 (TASGKT) provides a ligand contact to substrate.

It belongs to the IPP transferase family. As to quaternary structure, monomer. Mg(2+) is required as a cofactor.

The catalysed reaction is adenosine(37) in tRNA + dimethylallyl diphosphate = N(6)-dimethylallyladenosine(37) in tRNA + diphosphate. In terms of biological role, catalyzes the transfer of a dimethylallyl group onto the adenine at position 37 in tRNAs that read codons beginning with uridine, leading to the formation of N6-(dimethylallyl)adenosine (i(6)A). The chain is tRNA dimethylallyltransferase from Bifidobacterium longum subsp. infantis (strain ATCC 15697 / DSM 20088 / JCM 1222 / NCTC 11817 / S12).